Reading from the N-terminus, the 130-residue chain is UPF0102 protein RPE_0358 (130 aa).

Belongs to the UPF0102 family.

In Rhodopseudomonas palustris (strain BisA53), this protein is UPF0102 protein RPE_0358.